A 435-amino-acid polypeptide reads, in one-letter code: MKEELSKVSSMQNFEMIQRERLPTLYEVLIQRTSQPVDLWTFYTFLSQFPYAINYLDFWVDLMTHTRLCKNYIELVRKSLINFPQEQQQNGSTSTATFDLLNALIEEGHLDPEAPDKLLENSGPDVPFSPKLNELLGDWKHQSGIGQEALRNEDVALIVDEIMKRRSQQDGKPQITTKQLLHSAVGLCNTYLVSPEQSERYLSNIPMETRNRIIESVQIERKYDIEIFDDLKNLTYQFLEMDCFPKFLSRVALHNIHDEISDWRFHSVGVTNEKSNRSRGQTHISRSPFSNHTSISRIGFGLLWLGIGFWIGYVLIFLAYSRAIRVVTVVPFTLGCYCIVCGMYQVDIVYSWFGVTQRLLHRHKNAGNDEGDASSDTDHVPMILAVFGGRRRLTRIEHPFTRQLLRKRGLWCLLLVVGATAAFTVIFSCVPGRRV.

The Cytoplasmic segment spans residues 1-297 (MKEELSKVSS…PFSNHTSISR (297 aa)). One can recognise an RGS domain in the interval 159–248 (VDEIMKRRSQ…LEMDCFPKFL (90 aa)). Position 167 is a phosphoserine (serine 167). Residues 298–318 (IGFGLLWLGIGFWIGYVLIFL) traverse the membrane as a helical segment. At 319–325 (AYSRAIR) the chain is on the extracellular side. Residues 326–346 (VVTVVPFTLGCYCIVCGMYQV) form a helical membrane-spanning segment. Residues 347 to 409 (DIVYSWFGVT…FTRQLLRKRG (63 aa)) are Cytoplasmic-facing. The chain crosses the membrane as a helical span at residues 410–430 (LWCLLLVVGATAAFTVIFSCV). Topologically, residues 431–435 (PGRRV) are extracellular.

As to quaternary structure, forms an heterodimeric complex with RAX2. Also interacts with BUD8 and BUD9.

The protein localises to the cell membrane. Its subcellular location is the bud neck. It is found in the bud tip. Required for the establishment of the bipolar budding pattern. Involved in selecting bud sites at both the distal and proximal poles of daughter cells as well as near previously used division sites on mother cells. The RAX1-RAX2 complex performs the asymmetric localization of the two cortical landmarks, BUD8 and BUD9, at the distal and proximal poles, respectively. This chain is Bud site selection protein RAX1, found in Saccharomyces cerevisiae (strain ATCC 204508 / S288c) (Baker's yeast).